We begin with the raw amino-acid sequence, 449 residues long: Deoxyguanosinetriphosphate triphosphohydrolase-like protein (449 aa).

Positions 1–27 (MTSSVWQERRHGEDKQRRNDHRSPYQR) are disordered. Over residues 7 to 27 (QERRHGEDKQRRNDHRSPYQR) the composition is skewed to basic and acidic residues. Residues 59 to 255 (RLTHSLEVSQ…MELADDIAYA (197 aa)) enclose the HD domain.

Belongs to the dGTPase family. Type 2 subfamily.

In Shewanella baltica (strain OS195), this protein is Deoxyguanosinetriphosphate triphosphohydrolase-like protein.